Reading from the N-terminus, the 293-residue chain is Probable porphobilinogen deaminase (293 aa).

Cysteine 233 is subject to S-(dipyrrolylmethanemethyl)cysteine.

This sequence belongs to the HMBS family. It depends on dipyrromethane as a cofactor.

The catalysed reaction is 4 porphobilinogen + H2O = hydroxymethylbilane + 4 NH4(+). It functions in the pathway porphyrin-containing compound metabolism; protoporphyrin-IX biosynthesis; coproporphyrinogen-III from 5-aminolevulinate: step 2/4. Its function is as follows. Tetrapolymerization of the monopyrrole PBG into the hydroxymethylbilane pre-uroporphyrinogen in several discrete steps. The protein is Probable porphobilinogen deaminase of Saccharolobus islandicus (strain M.16.27) (Sulfolobus islandicus).